Here is a 310-residue protein sequence, read N- to C-terminus: ADP-L-glycero-D-manno-heptose-6-epimerase (310 aa).

Residues 10–11 (FI), 31–32 (DN), lysine 38, lysine 53, 75–79 (EGACS), and asparagine 92 contribute to the NADP(+) site. Tyrosine 140 functions as the Proton acceptor in the catalytic mechanism. Residue lysine 144 coordinates NADP(+). Residue asparagine 169 coordinates substrate. Valine 170 and lysine 178 together coordinate NADP(+). The Proton acceptor role is filled by lysine 178. Substrate contacts are provided by residues serine 180, histidine 187, 201 to 204 (FEGS), arginine 209, and tyrosine 272.

It belongs to the NAD(P)-dependent epimerase/dehydratase family. HldD subfamily. As to quaternary structure, homopentamer. It depends on NADP(+) as a cofactor.

It catalyses the reaction ADP-D-glycero-beta-D-manno-heptose = ADP-L-glycero-beta-D-manno-heptose. The protein operates within nucleotide-sugar biosynthesis; ADP-L-glycero-beta-D-manno-heptose biosynthesis; ADP-L-glycero-beta-D-manno-heptose from D-glycero-beta-D-manno-heptose 7-phosphate: step 4/4. In terms of biological role, catalyzes the interconversion between ADP-D-glycero-beta-D-manno-heptose and ADP-L-glycero-beta-D-manno-heptose via an epimerization at carbon 6 of the heptose. In Citrobacter koseri (strain ATCC BAA-895 / CDC 4225-83 / SGSC4696), this protein is ADP-L-glycero-D-manno-heptose-6-epimerase.